The primary structure comprises 115 residues: Toxin-like structure LSTX-D2 (115 aa).

Positions 1–22 (MKVLVLFSVLFLTLFSYSSTEA) are cleaved as a signal peptide. Residues 23–44 (IDEFDSDAEDDMLSLMANEQVR) constitute a propeptide that is removed on maturation. 4 disulfides stabilise this stretch: C48–C63, C55–C72, C62–C87, and C74–C85.

It belongs to the neurotoxin 19 (CSTX) family. 01 subfamily. As to expression, expressed by the venom gland.

The protein localises to the secreted. The sequence is that of Toxin-like structure LSTX-D2 from Lycosa singoriensis (Wolf spider).